A 323-amino-acid chain; its full sequence is Phosphomevalonate kinase (323 aa).

This sequence belongs to the GHMP kinase family. In terms of assembly, homodimer. It depends on Mg(2+) as a cofactor.

The catalysed reaction is (R)-5-phosphomevalonate + ATP = (R)-5-diphosphomevalonate + ADP. The protein operates within isoprenoid biosynthesis; isopentenyl diphosphate biosynthesis via mevalonate pathway; isopentenyl diphosphate from (R)-mevalonate: step 2/3. In terms of biological role, catalyzes the phosphorylation of (R)-mevalonate 5-phosphate (MVAP) to (R)-mevalonate 5-diphosphate (MVAPP). Functions in the mevalonate (MVA) pathway leading to isopentenyl diphosphate (IPP), a key precursor for the biosynthesis of isoprenoid compounds such as archaeal membrane lipids. This is Phosphomevalonate kinase from Saccharolobus solfataricus (strain ATCC 35092 / DSM 1617 / JCM 11322 / P2) (Sulfolobus solfataricus).